A 149-amino-acid polypeptide reads, in one-letter code: Secreted RxLR effector protein 47 (149 aa).

A signal peptide spans 1-22 (MICLLPLIAVMLFVFATHTVLA). Positions 57–79 (RFLRQETTFEEKPSVNDVHAEER) match the RxLR-dEER motif.

The protein belongs to the RxLR effector family.

It is found in the secreted. The protein resides in the host membrane. In terms of biological role, secreted effector that completely suppresses the host cell death induced by cell death-inducing proteins. In Plasmopara viticola (Downy mildew of grapevine), this protein is Secreted RxLR effector protein 47.